The following is an 874-amino-acid chain: Pyruvate, phosphate dikinase (874 aa).

The N-terminal stretch occupies residues 2–340; sequence AKWVYKFEEG…LYFLQTRNGK (339 aa). ATP is bound at residue Arg92. The segment at 340–399 is linker 1; sequence KRTAPAALQIACDLVDEGMITEEEAVVRIEAKSLDQLLHPTFNPAALKAGEVIGSALPAS. The segment at 400-498 is central; that stretch reads PGAAAGKVYF…TFAEGDYISL (99 aa). Position 453 is a phosphothreonine; by PDRP1 (Thr453). The active-site Tele-phosphohistidine intermediate is His455. The tract at residues 499–533 is linker 2; the sequence is DGSTGKIYKGDIETQEASVSGSFERIMVWADKFRT. Residues 534–874 are C-terminal; sequence LKVRTNADTP…AAAQAALNNK (341 aa). Substrate contacts are provided by Arg561, Arg617, Glu745, Gly766, Thr767, Asn768, and Asp769. Glu745 contacts Mg(2+). Position 769 (Asp769) interacts with Mg(2+). Residue Cys831 is the Proton donor of the active site.

It belongs to the PEP-utilizing enzyme family. As to quaternary structure, homodimer. Mg(2+) is required as a cofactor. Phosphorylation of Thr-453 in the dark inactivates the enzyme. Dephosphorylation upon light stimulation reactivates the enzyme.

It catalyses the reaction pyruvate + phosphate + ATP = phosphoenolpyruvate + AMP + diphosphate + H(+). Its activity is regulated as follows. Activated by light-induced dephosphorylation. Inhibited by dark-induced phosphorylation. Both reactions are catalyzed by PDRP1. In terms of biological role, catalyzes the reversible phosphorylation of pyruvate and phosphate. In E.histolytica and C.symbiosus, PPDK functions in the direction of ATP synthesis. This chain is Pyruvate, phosphate dikinase (ppdK), found in Clostridium symbiosum (Bacteroides symbiosus).